We begin with the raw amino-acid sequence, 510 residues long: Cytochrome P450 monooxygenase macH (510 aa).

The helical transmembrane segment at 7–29 threads the bilayer; the sequence is LPVSLWLIAAGTFAVYHAIRAVY. Cys-454 lines the heme pocket.

It belongs to the cytochrome P450 family. Heme serves as cofactor.

Its subcellular location is the membrane. The protein operates within secondary metabolite biosynthesis; terpenoid biosynthesis. Cytochrome P450 monooxygenase; part of the gene cluster that mediates the biosynthesis of macrophorins, isoprenoid epoxycyclohexenones containing cyclized drimane moieties. The first step of the pathway is the synthesis of 6-methylsalicylic acid (6-MSA) by the polyketide synthase macA. 6-MSA is then converted to m-cresol by the decarboxylase macB. The cytochrome P450 monooxygenase macC then catalyzes the oxidation of m-cresol to toluquinol. Epoxidation of toluquinol is then performed by the short chain dehydrogenase macD, with the help of macE, and a further prenylation by macG leads to 7-deacetoxyyanuthone A. The next step is the hydroxylation of C-22 of 7-deacetoxyyanuthone A by the cytochrome P450 monooxygenase macH to yield 22-deacetylyanuthone A. O-Mevalon transferase macI then attaches mevalon to the hydroxyl group of 22-deacetylyanuthone A to produce yanuthone E. The terpene cyclase macJ catalyzes the cyclization of 22-deacetylyanuthone A to macrophorin A. MacJ is also able to catalyze cyclization of yanuthone E and 7-deacetoxyyanuthone A to their corresponding macrophorins. The macJ products can be further modified by macH and macJ, as well as by the FAD-dependent monooxygenase macF, to produce additional macrophorins, including 4'-oxomacrophorin A, 4'-oxomacrophorin D and 4'-oxomacrophorin E. The sequence is that of Cytochrome P450 monooxygenase macH from Penicillium terrestre.